Here is a 604-residue protein sequence, read N- to C-terminus: Linalool synthase Tps-5073L4, chloroplastic (604 aa).

The transit peptide at 1–36 directs the protein to the chloroplast; the sequence is MSSMRIYVAIMKKPSVKHVDYVDKKASKPSWRVSSS. (2E)-geranyl diphosphate-binding residues include arginine 323, aspartate 360, aspartate 364, arginine 501, and aspartate 504. The Mg(2+) site is built by aspartate 360 and aspartate 364. A DDXXD motif motif is present at residues 360-364; the sequence is DDVYD. Mg(2+) contacts are provided by aspartate 504, threonine 508, and glutamate 512.

This sequence belongs to the terpene synthase family. Tpsb subfamily. In terms of assembly, monomer. It depends on Mg(2+) as a cofactor. Mn(2+) serves as cofactor.

It is found in the plastid. The protein localises to the chloroplast. It catalyses the reaction (2E)-geranyl diphosphate + H2O = linalool + diphosphate. It functions in the pathway secondary metabolite biosynthesis; terpenoid biosynthesis. Functionally, monoterpene synthase (mono-TPS) involved in the biosynthesis of monoterpenes natural products. Catalyzes the conversion of (2E)-geranyl diphosphate (GPP) into linalool. The chain is Linalool synthase Tps-5073L4, chloroplastic from Perilla frutescens (Beefsteak mint).